The primary structure comprises 142 residues: Transcriptional regulator MraZ (142 aa).

SpoVT-AbrB domains lie at 5–47 (THTP…PAPE) and 76–119 (AHDE…DRVA).

Belongs to the MraZ family. In terms of assembly, forms oligomers.

It is found in the cytoplasm. The protein resides in the nucleoid. In Salinispora arenicola (strain CNS-205), this protein is Transcriptional regulator MraZ.